Reading from the N-terminus, the 361-residue chain is Peptide chain release factor 1 (361 aa).

Q237 carries the N5-methylglutamine modification. The span at 285–296 (DEKRRSAEESTR) shows a compositional bias: basic and acidic residues. The segment at 285–305 (DEKRRSAEESTRRNLVSSGDR) is disordered.

It belongs to the prokaryotic/mitochondrial release factor family. Methylated by PrmC. Methylation increases the termination efficiency of RF1.

The protein localises to the cytoplasm. Functionally, peptide chain release factor 1 directs the termination of translation in response to the peptide chain termination codons UAG and UAA. The chain is Peptide chain release factor 1 from Shewanella halifaxensis (strain HAW-EB4).